The following is a 66-amino-acid chain: Sodium/potassium-transporting ATPase subunit gamma (66 aa).

The helical transmembrane segment at 29 to 46 (GGLIFAGLAFVVGLLILL) threads the bilayer.

This sequence belongs to the FXYD family. Regulatory subunit of the sodium/potassium-transporting ATPase which is composed of a catalytic alpha subunit, an auxiliary non-catalytic beta subunit and an additional regulatory subunit. Highest levels expressed in the kidney and spleen. Restricted to the basolateral membrane in renal epithelial cells and varies in its level of expression along the nephron.

The protein localises to the membrane. Its function is as follows. May be involved in forming the receptor site for cardiac glycoside binding or may modulate the transport function of the sodium ATPase. This is Sodium/potassium-transporting ATPase subunit gamma (Fxyd2) from Rattus norvegicus (Rat).